We begin with the raw amino-acid sequence, 72 residues long: SRY-related protein AES2 (72 aa).

Residues 1–69 (VKRPMNAFMV…KHMADYPDYK (69 aa)) constitute a DNA-binding region (HMG box).

It localises to the nucleus. The sequence is that of SRY-related protein AES2 from Alligator mississippiensis (American alligator).